The sequence spans 1201 residues: Kinesin-like protein costa (1201 aa).

The 388-residue stretch at P4–V391 folds into the Kinesin motor domain. Residues S23–Y92 are disordered. The span at E28–N56 shows a compositional bias: basic and acidic residues. Polar residues predominate over residues P57–D75. Position 175-182 (G175–S182) interacts with ATP. Disordered regions lie at residues A502 to D536, H565 to L606, and A618 to S639. Residues S510–D521 are compositionally biased toward low complexity. A phosphoserine mark is found at S599 and S605. Coiled coils occupy residues A652–K821 and T968–L1001.

This sequence belongs to the TRAFAC class myosin-kinesin ATPase superfamily. Kinesin family. KIF27 subfamily. Homodimer (Potential). Binds microtubules. Interacts with ci, smo, sgg, CkIalpha and protein kinase A catalytic subunit. Interacts (via kinesin motor domain) with Ubr3. Polyubiquitinated by Ubr3, which leads to proteasomal degradation.

It is found in the cytoplasm. It localises to the cytoskeleton. Functionally, regulates cubitus interruptus (ci) processing by recruiting multiple kinases to promote its efficient phosphorylation. Scaffolds multiple kinases and ci into proximity to promote its hyperphosphorylation, which then targets it for SCFSlimb/proteasome-mediated processing to generate its repressor form. Hh signaling inhibits ci phosphorylation by interfering with the cos-ci-kinases complex formation. Negatively regulates hh-signaling pathways during various processes, including photoreceptor differentiation. May negatively regulate a hh-signaling pathway which functions in the intestinal immune response to bacterial uracil by activating the Duox-dependent production of reactive oxygen species (ROS). The sequence is that of Kinesin-like protein costa (cos) from Drosophila melanogaster (Fruit fly).